The chain runs to 666 residues: Non-receptor tyrosine-protein kinase TNK1 (666 aa).

Residues serine 60 and serine 96 each carry the phosphoserine modification. A Protein kinase domain is found at 116-377; it reads VCRGELLGSG…PSFSHLEGLL (262 aa). ATP-binding positions include 122–130 and lysine 148; that span reads LGSGCFGVV. Residue aspartate 245 is the Proton acceptor of the active site. Serine 255 and serine 411 each carry phosphoserine. Residues 380 to 445 form the SH3 domain; it reads AGPSEACCVR…PASAVTLADA (66 aa). The disordered stretch occupies residues 446–493; it reads GGLPATRPVHRGTPARGDQHPGSIDGDRKKANLWDAPPARGQRRNMPL. Serine 502 is subject to Phosphoserine. The tract at residues 506–579 is disordered; sequence VLSLGPRPTG…MGMPGARKAA (74 aa). Threonine 514 carries the post-translational modification Phosphothreonine. Serine 519 carries the phosphoserine modification. Over residues 531-541 the composition is skewed to pro residues; it reads QGPPGLPPRPP. The span at 542–552 shows a compositional bias: low complexity; the sequence is LSSSSPQPSQP. The residue at position 582 (serine 582) is a Phosphoserine.

This sequence belongs to the protein kinase superfamily. Tyr protein kinase family. As to quaternary structure, interacts with the SH3 domain of PLCG1 via its Pro-rich domain. In terms of processing, autophosphorylated on tyrosine residues. As to expression, expressed in all umbilical cord blood, bone marrow and adult blood cell sub-populations and in several leukemia cell lines. Highly expressed in fetal blood, brain, lung, liver and kidney. Detected at lower levels in adult prostate, testis, ovary, small intestine and colon. Not expressed in adult lung, liver, kidney or brain.

It is found in the cytoplasm. It localises to the membrane. It carries out the reaction L-tyrosyl-[protein] + ATP = O-phospho-L-tyrosyl-[protein] + ADP + H(+). Involved in negative regulation of cell growth. Has tumor suppressor properties. Plays a negative regulatory role in the Ras-MAPK pathway. May function in signaling pathways utilized broadly during fetal development and more selectively in adult tissues and in cells of the lymphohematopoietic system. Could specifically be involved in phospholipid signal transduction. This Homo sapiens (Human) protein is Non-receptor tyrosine-protein kinase TNK1.